We begin with the raw amino-acid sequence, 210 residues long: Small ribosomal subunit protein uS3 (210 aa).

One can recognise a KH type-2 domain in the interval 38-106 (LKSFLKKRLY…EVYLNIQEVR (69 aa)).

Belongs to the universal ribosomal protein uS3 family. As to quaternary structure, part of the 30S ribosomal subunit. Forms a tight complex with proteins S10 and S14.

Binds the lower part of the 30S subunit head. Binds mRNA in the 70S ribosome, positioning it for translation. This Geotalea daltonii (strain DSM 22248 / JCM 15807 / FRC-32) (Geobacter daltonii) protein is Small ribosomal subunit protein uS3.